The chain runs to 387 residues: 4-hydroxy-3-methylbut-2-en-1-yl diphosphate synthase (flavodoxin) (387 aa).

Residues Cys-272, Cys-275, Cys-307, and Glu-314 each contribute to the [4Fe-4S] cluster site.

Belongs to the IspG family. It depends on [4Fe-4S] cluster as a cofactor.

The enzyme catalyses (2E)-4-hydroxy-3-methylbut-2-enyl diphosphate + oxidized [flavodoxin] + H2O + 2 H(+) = 2-C-methyl-D-erythritol 2,4-cyclic diphosphate + reduced [flavodoxin]. It functions in the pathway isoprenoid biosynthesis; isopentenyl diphosphate biosynthesis via DXP pathway; isopentenyl diphosphate from 1-deoxy-D-xylulose 5-phosphate: step 5/6. Its function is as follows. Converts 2C-methyl-D-erythritol 2,4-cyclodiphosphate (ME-2,4cPP) into 1-hydroxy-2-methyl-2-(E)-butenyl 4-diphosphate. This is 4-hydroxy-3-methylbut-2-en-1-yl diphosphate synthase (flavodoxin) from Granulibacter bethesdensis (strain ATCC BAA-1260 / CGDNIH1).